The sequence spans 154 residues: Acidic phospholipase A2 1 (154 aa).

An N-terminal signal peptide occupies residues 1–19 (MHPAHLLVLLGVCVSLLGA). Residues 20-27 (ARIPPLPL) constitute a propeptide that is removed on maturation. 7 cysteine pairs are disulfide-bonded: Cys38–Cys104, Cys54–Cys153, Cys56–Cys72, Cys71–Cys132, Cys78–Cys125, Cys88–Cys118, and Cys111–Cys123. Residues Phe55, Gly57, and Gly59 each contribute to the Ca(2+) site. His75 is an active-site residue. Ca(2+) is bound at residue Asp76. Asp126 is a catalytic residue.

This sequence belongs to the phospholipase A2 family. Group I subfamily. D49 sub-subfamily. Monomer. Requires Ca(2+) as cofactor. As to expression, expressed by the venom gland.

The protein resides in the secreted. The catalysed reaction is a 1,2-diacyl-sn-glycero-3-phosphocholine + H2O = a 1-acyl-sn-glycero-3-phosphocholine + a fatty acid + H(+). Its function is as follows. Snake venom phospholipase A2 (PLA2) that shows moderate enzymatic activity and exhibits procoagulant activity. PLA2 catalyzes the calcium-dependent hydrolysis of the 2-acyl groups in 3-sn-phosphoglycerides. This chain is Acidic phospholipase A2 1, found in Pseudonaja textilis (Eastern brown snake).